Consider the following 802-residue polypeptide: Outer membrane usher protein PefC (802 aa).

A signal peptide spans 1–24 (MSFHHRVFKLSALSLALFSHLSFA). Cysteine 782 and cysteine 801 are disulfide-bonded.

This sequence belongs to the fimbrial export usher family.

It localises to the cell outer membrane. Its function is as follows. Involved in the export and assembly of FimA fimbrial subunits across the outer membrane. This Salmonella typhimurium (strain LT2 / SGSC1412 / ATCC 700720) protein is Outer membrane usher protein PefC (pefC).